We begin with the raw amino-acid sequence, 503 residues long: DEAD-box ATP-dependent RNA helicase CshA (503 aa).

Positions 2–30 match the Q motif motif; that stretch reads QNFKELGISDKTVETLEAMGFKEPTPIQK. Residues 33–203 enclose the Helicase ATP-binding domain; it reads IPYTLEGKDI…QQFMKSPQIV (171 aa). 46 to 53 serves as a coordination point for ATP; it reads AQTGTGKT. Positions 150-153 match the DEAD box motif; that stretch reads DEAD. In terms of domain architecture, Helicase C-terminal spans 214 to 375; it reads QIDEYYTIVK…LRPPHRKEVL (162 aa). The tract at residues 436-503 is disordered; the sequence is EKPLARKNRQ…KGRTFADLQK (68 aa). Residues 466–480 show a composition bias toward basic residues; that stretch reads KRSKGNFNKKKGKKT. Residues 481-490 are compositionally biased toward basic and acidic residues; it reads DRRERQDKGR.

This sequence belongs to the DEAD box helicase family. CshA subfamily. Oligomerizes, may be a member of the RNA degradosome.

It localises to the cytoplasm. The enzyme catalyses ATP + H2O = ADP + phosphate + H(+). In terms of biological role, DEAD-box RNA helicase possibly involved in RNA degradation. Unwinds dsRNA in both 5'- and 3'-directions, has RNA-dependent ATPase activity. This chain is DEAD-box ATP-dependent RNA helicase CshA, found in Staphylococcus haemolyticus (strain JCSC1435).